The chain runs to 510 residues: NAD(P)H-quinone oxidoreductase subunit 2 A, chloroplastic (510 aa).

13 helical membrane passes run 24-44, 57-77, 99-119, 124-144, 149-169, 183-203, 227-247, 295-315, 323-343, 354-374, 395-415, 418-438, and 484-504; these read LLLF…GLIL, IPWL…ALLF, IFQF…VEYI, MAIT…MFLC, LITI…LSGY, YLLM…WLYG, PGIS…LSPA, WHLL…LIAI, MLAY…IVGD, YMLF…LFGL, ALSL…AGFF, LYLF…IGLL, and MIVC…IIAI.

The protein belongs to the complex I subunit 2 family. NDH is composed of at least 16 different subunits, 5 of which are encoded in the nucleus.

The protein resides in the plastid. It localises to the chloroplast thylakoid membrane. The catalysed reaction is a plastoquinone + NADH + (n+1) H(+)(in) = a plastoquinol + NAD(+) + n H(+)(out). It carries out the reaction a plastoquinone + NADPH + (n+1) H(+)(in) = a plastoquinol + NADP(+) + n H(+)(out). NDH shuttles electrons from NAD(P)H:plastoquinone, via FMN and iron-sulfur (Fe-S) centers, to quinones in the photosynthetic chain and possibly in a chloroplast respiratory chain. The immediate electron acceptor for the enzyme in this species is believed to be plastoquinone. Couples the redox reaction to proton translocation, and thus conserves the redox energy in a proton gradient. This chain is NAD(P)H-quinone oxidoreductase subunit 2 A, chloroplastic, found in Solanum lycopersicum (Tomato).